Reading from the N-terminus, the 363-residue chain is Adenosine deaminase (363 aa).

Zn(2+) contacts are provided by histidine 42 and histidine 44. A purine D-ribonucleoside is bound by residues 44–46, aspartate 172, and glycine 201; that span reads HLD. Positions 170 to 184 are gating helix loop; regulates binding affinity for substrates and thus substrate selectivity; it reads IGDTGHEAANIKASA. Histidine 226 is a binding site for Zn(2+). A purine D-ribonucleoside-binding residues include glutamate 229, histidine 253, and aspartate 310. Zn(2+) is bound at residue aspartate 310.

It belongs to the metallo-dependent hydrolases superfamily. Adenosine and AMP deaminases family. The cofactor is Zn(2+).

The catalysed reaction is adenosine + H2O + H(+) = inosine + NH4(+). It carries out the reaction S-methyl-5'-thioadenosine + H2O + H(+) = S-methyl-5'-thioinosine + NH4(+). It functions in the pathway purine metabolism; purine nucleoside salvage. Its activity is regulated as follows. Inhibited by coformycin and methylthiocoformycin (MT-coformycin). Its function is as follows. Catalyzes the hydrolytic deamination of adenosine to produce inosine. Unlike mammalian adenosine deaminases, also catalyzes the deamination of 5'-methylthioadenosine (MTA), a by-product of polyamine biosynthesis, to produce 5'-methylthioinosine (MTI). Plays an essential role in the purine salvage pathway which allows the parasite to use host cell purines for the synthesis of nucleic acids. In Plasmodium vivax (strain Salvador I), this protein is Adenosine deaminase.